A 125-amino-acid chain; its full sequence is SKP1-like protein 7 (125 aa).

The interaction with the F-box domain of F-box proteins stretch occupies residues 94 to 125; sequence MNAAYDLHIKSLLALAYQTVADMVNDNKWAFE.

Belongs to the SKP1 family. In terms of assembly, part of a SCF (SKP1-cullin-F-box) protein ligase complex. In terms of tissue distribution, restricted to siliques.

Its subcellular location is the nucleus. It participates in protein modification; protein ubiquitination. In terms of biological role, involved in ubiquitination and subsequent proteasomal degradation of target proteins. Together with CUL1, RBX1 and a F-box protein, it forms a SCF E3 ubiquitin ligase complex. The functional specificity of this complex depends on the type of F-box protein. In the SCF complex, it serves as an adapter that links the F-box protein to CUL1. The polypeptide is SKP1-like protein 7 (ASK7) (Arabidopsis thaliana (Mouse-ear cress)).